Reading from the N-terminus, the 180-residue chain is Crossover junction endodeoxyribonuclease RuvC (180 aa).

Active-site residues include Asp-7, Glu-66, and Asp-138. Residues Asp-7, Glu-66, and Asp-138 each contribute to the Mg(2+) site.

Belongs to the RuvC family. In terms of assembly, homodimer which binds Holliday junction (HJ) DNA. The HJ becomes 2-fold symmetrical on binding to RuvC with unstacked arms; it has a different conformation from HJ DNA in complex with RuvA. In the full resolvosome a probable DNA-RuvA(4)-RuvB(12)-RuvC(2) complex forms which resolves the HJ. The cofactor is Mg(2+).

Its subcellular location is the cytoplasm. It catalyses the reaction Endonucleolytic cleavage at a junction such as a reciprocal single-stranded crossover between two homologous DNA duplexes (Holliday junction).. In terms of biological role, the RuvA-RuvB-RuvC complex processes Holliday junction (HJ) DNA during genetic recombination and DNA repair. Endonuclease that resolves HJ intermediates. Cleaves cruciform DNA by making single-stranded nicks across the HJ at symmetrical positions within the homologous arms, yielding a 5'-phosphate and a 3'-hydroxyl group; requires a central core of homology in the junction. The consensus cleavage sequence is 5'-(A/T)TT(C/G)-3'. Cleavage occurs on the 3'-side of the TT dinucleotide at the point of strand exchange. HJ branch migration catalyzed by RuvA-RuvB allows RuvC to scan DNA until it finds its consensus sequence, where it cleaves and resolves the cruciform DNA. This is Crossover junction endodeoxyribonuclease RuvC from Burkholderia pseudomallei (strain 1710b).